A 459-amino-acid chain; its full sequence is Vacuolar cation/proton exchanger 3 (459 aa).

Residues 1–67 (MGSIVEPWAA…TLKNILSNLQ (67 aa)) are Cytoplasmic-facing. Residues 68 to 88 (EVILGTKLTLLFLAIPLAILA) form a helical membrane-spanning segment. Residues 89 to 95 (NSYNYGR) lie on the Extracellular side of the membrane. A helical membrane pass occupies residues 96–116 (PLIFGLSLIGLTPLAERVSFL). Residues 117 to 129 (TEQLAFYTGPTVG) lie on the Cytoplasmic side of the membrane. A helical membrane pass occupies residues 130-150 (GLLNATCGNATELIIAILALA). Residues 137–172 (GNATELIIAILALANNKVAVVKYSLLGSILSNLLLV) are cation selection. The Extracellular portion of the chain corresponds to 151 to 161 (NNKVAVVKYSL). The helical transmembrane segment at 162-182 (LGSILSNLLLVLGTSLFFGGI) threads the bilayer. Residues 183 to 195 (ANIRREQRFDRKQ) are Cytoplasmic-facing. The helical transmembrane segment at 196-216 (ADVNFFLLLMGLLCHLLPLLL) threads the bilayer. The Extracellular segment spans residues 217 to 238 (KYAATGEVSTSMINKMSLTLSR). The helical transmembrane segment at 239-259 (TSSIVMLIAYIAYLIFQLWTH) threads the bilayer. Residues 260 to 283 (RQLFEAQQDDDDAYDDEVSVEETP) lie on the Cytoplasmic side of the membrane. Residues 284-304 (VIGFWSGFAWLVGMTIVIALL) traverse the membrane as a helical segment. Topologically, residues 305–327 (SEYVVDTIEDASDSWGLSVSFIS) are extracellular. The chain crosses the membrane as a helical span at residues 328–348 (IILLPIVGNAAEHAGAIIFAF). The segment at 335 to 370 (GNAAEHAGAIIFAFKNKLDISLGVALGSATQISLFV) is cation selection. Residues 349 to 362 (KNKLDISLGVALGS) are Cytoplasmic-facing. A helical membrane pass occupies residues 363 to 383 (ATQISLFVVPLSVIVAWILGI). At 384-386 (KMD) the chain is on the extracellular side. The chain crosses the membrane as a helical span at residues 387–407 (LNFNILETSSLALAIIITAFT). At 408–417 (LQDGTSHYMK) the chain is on the cytoplasmic side. A helical membrane pass occupies residues 418–438 (GLVLLLCYVIIAACFFVDQIP). The Extracellular segment spans residues 439-459 (QPNDLDVGLQPMNNLGEVFSA).

It belongs to the Ca(2+):cation antiporter (CaCA) (TC 2.A.19) family. Cation/proton exchanger (CAX) subfamily. In terms of tissue distribution, expressed in roots, stems and flowers.

Its subcellular location is the vacuole membrane. Inhibited by excess of Ca(2+). In terms of biological role, vacuolar cation/proton exchanger (CAX). Translocates Ca(2+) and other metal ions into vacuoles using the proton gradient formed by H(+)-ATPase and H(+)-pyrophosphatase. Involved in ion homeostasis in association with CAX1. The polypeptide is Vacuolar cation/proton exchanger 3 (CAX3) (Arabidopsis thaliana (Mouse-ear cress)).